Reading from the N-terminus, the 449-residue chain is MARQYFGTDGIRGRVNTSPMTAETALRLSIAAARTFAPEGGREVVIGRDTRRSGDMIEAALVAGFTSMGITPVLLGVVPTPAVALMARETGAALGVMVSASHNKFEDNGLKLFSPEGIKFDDDTEEALEMAMGTALKGEYAAPAEITLPRTMAGTSNRYVRRCLDTLAGGQDFSKLKVVLDCAHGAGFETGPAALTELGAQLTVIGAAPDGININAGFGSTATGALKAAVLETGAHIGIALDGDADRLIVIDETGTEADGDQVMGLIAGEMHRTGRLKGGGMVATVMSNMGLSEYLKTEGLTLARTKVGDRYVGEHMRAHGFNLGGEQSGHIILSDVSTTGDGLLAGLQILSVLAARGGKASDMLRVFTPAPQELINIRYSGANPLESDRVKTALAEAEGLLGDRGRMVVRKSGTEPLIRVMAEALDEDLMLKALHHAANAVTAAAGNS.

The active-site Phosphoserine intermediate is serine 101. Mg(2+)-binding residues include serine 101, aspartate 242, aspartate 244, and aspartate 246. Phosphoserine is present on serine 101.

It belongs to the phosphohexose mutase family. Requires Mg(2+) as cofactor. Activated by phosphorylation.

It catalyses the reaction alpha-D-glucosamine 1-phosphate = D-glucosamine 6-phosphate. Catalyzes the conversion of glucosamine-6-phosphate to glucosamine-1-phosphate. The protein is Phosphoglucosamine mutase of Hyphomonas neptunium (strain ATCC 15444).